Consider the following 853-residue polypeptide: Penicillin-binding protein 1A (853 aa).

At 1–6 (MRIAKL) the chain is on the cytoplasmic side. A helical; Signal-anchor for type II membrane protein transmembrane segment spans residues 7–27 (ILNTLLTLCILGLVAGGMLYF). Residues 28–853 (HLKSELQQPM…TPATQPQELF (826 aa)) are Periplasmic-facing. The tract at residues 37 to 205 (MQIYTADGKL…STMNPLYSLK (169 aa)) is transglycosylase. E75 serves as the catalytic Proton donor; for transglycosylase activity. The segment at 387–681 (QRANGEWQLG…RVISGELAFL (295 aa)) is transpeptidase. S441 acts as the Acyl-ester intermediate; for transpeptidase activity in catalysis. The disordered stretch occupies residues 615–636 (NALKPTDDSTNGEELDQQPETV).

It in the N-terminal section; belongs to the glycosyltransferase 51 family. This sequence in the C-terminal section; belongs to the transpeptidase family.

It localises to the cell inner membrane. The catalysed reaction is [GlcNAc-(1-&gt;4)-Mur2Ac(oyl-L-Ala-gamma-D-Glu-L-Lys-D-Ala-D-Ala)](n)-di-trans,octa-cis-undecaprenyl diphosphate + beta-D-GlcNAc-(1-&gt;4)-Mur2Ac(oyl-L-Ala-gamma-D-Glu-L-Lys-D-Ala-D-Ala)-di-trans,octa-cis-undecaprenyl diphosphate = [GlcNAc-(1-&gt;4)-Mur2Ac(oyl-L-Ala-gamma-D-Glu-L-Lys-D-Ala-D-Ala)](n+1)-di-trans,octa-cis-undecaprenyl diphosphate + di-trans,octa-cis-undecaprenyl diphosphate + H(+). The enzyme catalyses Preferential cleavage: (Ac)2-L-Lys-D-Ala-|-D-Ala. Also transpeptidation of peptidyl-alanyl moieties that are N-acyl substituents of D-alanine.. It functions in the pathway cell wall biogenesis; peptidoglycan biosynthesis. Functionally, cell wall formation. Synthesis of cross-linked peptidoglycan from the lipid intermediates. The enzyme has a penicillin-insensitive transglycosylase N-terminal domain (formation of linear glycan strands) and a penicillin-sensitive transpeptidase C-terminal domain (cross-linking of the peptide subunits). In Haemophilus influenzae (strain ATCC 51907 / DSM 11121 / KW20 / Rd), this protein is Penicillin-binding protein 1A (mrcA).